Consider the following 60-residue polypeptide: Large ribosomal subunit protein bL33 (60 aa).

It belongs to the bacterial ribosomal protein bL33 family.

The protein is Large ribosomal subunit protein bL33 of Chlorobaculum tepidum (strain ATCC 49652 / DSM 12025 / NBRC 103806 / TLS) (Chlorobium tepidum).